The chain runs to 277 residues: Diaminopimelate epimerase (277 aa).

Substrate is bound by residues Asn-13, Gln-46, and Asn-66. The active-site Proton donor is Cys-75. Substrate is bound by residues Gly-76–Asn-77, Asn-160, Asn-193, and Glu-211–Arg-212. The Proton acceptor role is filled by Cys-220. Gly-221–Ser-222 lines the substrate pocket.

Belongs to the diaminopimelate epimerase family. In terms of assembly, homodimer.

It is found in the cytoplasm. It catalyses the reaction (2S,6S)-2,6-diaminopimelate = meso-2,6-diaminopimelate. It participates in amino-acid biosynthesis; L-lysine biosynthesis via DAP pathway; DL-2,6-diaminopimelate from LL-2,6-diaminopimelate: step 1/1. Its function is as follows. Catalyzes the stereoinversion of LL-2,6-diaminopimelate (L,L-DAP) to meso-diaminopimelate (meso-DAP), a precursor of L-lysine and an essential component of the bacterial peptidoglycan. This Legionella pneumophila subsp. pneumophila (strain Philadelphia 1 / ATCC 33152 / DSM 7513) protein is Diaminopimelate epimerase.